The following is a 924-amino-acid chain: Autophagy-related protein 9B (924 aa).

The disordered stretch occupies residues 1–144 (MVSRMGWGGR…QDSPGLRVGP (144 aa)). Residues 1-207 (MVSRMGWGGR…KIYSYHQRNG (207 aa)) are Cytoplasmic-facing. Low complexity predominate over residues 17–27 (WGDLGPGSVPL). Pro residues predominate over residues 28-40 (LPMPLPPPPPPSC). Residues 78-88 (LQGTGASQSCH) are compositionally biased toward polar residues. A compositionally biased stretch (low complexity) spans 98–113 (PTQAQPAMTPASASPS). Residues 151-154 (YERL) carry the Tyrosine-based sorting signal motif. The helical transmembrane segment at 208-228 (FACILLEDVFQLGQFIFIVTF) threads the bilayer. The Lumenal segment spans residues 229 to 276 (TTFLLRCVDYNVLFANQPSNHTRPGPFHSKVTLSDAILPSAQCAERIR). The helical transmembrane segment at 277-297 (SSPLLVLLLVLAAGFWLVQLL) threads the bilayer. Over 298-438 (RSVCNLFSYW…GALAARWGRT (141 aa)) the chain is Cytoplasmic. Residues 439 to 459 (VLLLAALNLALSPLVLAWQVL) lie within the membrane without spanning it. Over 460–526 (HVFYSHVELL…AAPPAPLRTL (67 aa)) the chain is Cytoplasmic. A helical transmembrane segment spans residues 527 to 547 (LARQLVFFAGALFAALLVLTV). The Lumenal segment spans residues 548-551 (YDED). A helical transmembrane segment spans residues 552 to 572 (VLAVEHVLTAMTALGVTATVA). At 573-624 (RSFIPEEQCQGRAPQLLLQTALAHMHYLPEEPGPGGRDRAYRQMAQLLQYRA) the chain is on the cytoplasmic side. An intramembrane segment occupies 625-645 (VSLLEELLSPLLTPLFLLFWF). At 646–924 (RPRALEIIDF…KEPDRASCTD (279 aa)) the chain is on the cytoplasmic side. Residues 847 to 924 (QQEPWGEAAA…KEPDRASCTD (78 aa)) are disordered. A compositionally biased stretch (low complexity) spans 878 to 890 (SWSSDGSSPASSP). Positions 913 to 924 (TQKEPDRASCTD) are enriched in basic and acidic residues.

Belongs to the ATG9 family. Homotrimer; forms a homotrimer with a central pore that forms a path between the two membrane leaflets. In terms of tissue distribution, highly expressed in placenta (trophoblast cells) and pituitary gland. Not expressed in vascular endothelial.

The protein resides in the preautophagosomal structure membrane. It carries out the reaction a 1,2-diacyl-sn-glycero-3-phosphocholine(in) = a 1,2-diacyl-sn-glycero-3-phosphocholine(out). It catalyses the reaction a 1,2-diacyl-sn-glycero-3-phospho-L-serine(in) = a 1,2-diacyl-sn-glycero-3-phospho-L-serine(out). The catalysed reaction is a 1,2-diacyl-sn-glycero-3-phosphoethanolamine(in) = a 1,2-diacyl-sn-glycero-3-phosphoethanolamine(out). Its function is as follows. Phospholipid scramblase involved in autophagy by mediating autophagosomal membrane expansion. Cycles between the preautophagosomal structure/phagophore assembly site (PAS) and the cytoplasmic vesicle pool and supplies membrane for the growing autophagosome. Lipid scramblase activity plays a key role in preautophagosomal structure/phagophore assembly by distributing the phospholipids that arrive through ATG2 (ATG2A or ATG2B) from the cytoplasmic to the luminal leaflet of the bilayer, thereby driving autophagosomal membrane expansion. In addition to autophagy, also plays a role in necrotic cell death. The sequence is that of Autophagy-related protein 9B (ATG9B) from Homo sapiens (Human).